Consider the following 427-residue polypeptide: Dihydroorotase (427 aa).

Residues His-60 and His-62 each contribute to the Zn(2+) site. Residues 62 to 64 (HLR) and Asn-94 contribute to the substrate site. Residues Asp-152, His-179, and His-232 each coordinate Zn(2+). Position 278 (Asn-278) interacts with substrate. Asp-305 serves as a coordination point for Zn(2+). The active site involves Asp-305. Substrate-binding positions include His-309 and 323–324 (FG).

This sequence belongs to the metallo-dependent hydrolases superfamily. DHOase family. Class I DHOase subfamily. Zn(2+) serves as cofactor.

It catalyses the reaction (S)-dihydroorotate + H2O = N-carbamoyl-L-aspartate + H(+). Its pathway is pyrimidine metabolism; UMP biosynthesis via de novo pathway; (S)-dihydroorotate from bicarbonate: step 3/3. Its function is as follows. Catalyzes the reversible cyclization of carbamoyl aspartate to dihydroorotate. The polypeptide is Dihydroorotase (Bacillus caldolyticus).